We begin with the raw amino-acid sequence, 432 residues long: Adenylosuccinate synthetase (432 aa).

GTP contacts are provided by residues 13–19 (GDEGKGK) and 41–43 (GHT). The active-site Proton acceptor is the Asp14. 2 residues coordinate Mg(2+): Asp14 and Gly41. IMP is bound by residues 14-17 (DEGK), 39-42 (NAGH), Thr130, Arg144, Gln225, Thr240, and Arg304. His42 acts as the Proton donor in catalysis. Residue 300–306 (ATTGRRR) participates in substrate binding. GTP-binding positions include Arg306, 332-334 (KLD), and 415-417 (STG).

It belongs to the adenylosuccinate synthetase family. Homodimer. Mg(2+) serves as cofactor.

It localises to the cytoplasm. The catalysed reaction is IMP + L-aspartate + GTP = N(6)-(1,2-dicarboxyethyl)-AMP + GDP + phosphate + 2 H(+). Its pathway is purine metabolism; AMP biosynthesis via de novo pathway; AMP from IMP: step 1/2. Its function is as follows. Plays an important role in the de novo pathway of purine nucleotide biosynthesis. Catalyzes the first committed step in the biosynthesis of AMP from IMP. This is Adenylosuccinate synthetase from Salmonella heidelberg (strain SL476).